A 531-amino-acid chain; its full sequence is Putative aldehyde dehydrogenase family 7 member A1 homolog (531 aa).

An NAD(+)-binding site is contributed by 264 to 269; that stretch reads GSSEIG. The active-site Proton acceptor is the Glu-286. Cys-320 (nucleophile) is an active-site residue.

The protein belongs to the aldehyde dehydrogenase family. Homotetramer.

The enzyme catalyses an aldehyde + NAD(+) + H2O = a carboxylate + NADH + 2 H(+). This Caenorhabditis elegans protein is Putative aldehyde dehydrogenase family 7 member A1 homolog (alh-9).